The following is a 397-amino-acid chain: Ornithine aminotransferase (397 aa).

Lysine 255 bears the N6-(pyridoxal phosphate)lysine mark.

Belongs to the class-III pyridoxal-phosphate-dependent aminotransferase family. OAT subfamily. It depends on pyridoxal 5'-phosphate as a cofactor.

The protein resides in the cytoplasm. The enzyme catalyses a 2-oxocarboxylate + L-ornithine = L-glutamate 5-semialdehyde + an L-alpha-amino acid. It functions in the pathway amino-acid biosynthesis; L-proline biosynthesis; L-glutamate 5-semialdehyde from L-ornithine: step 1/1. Catalyzes the interconversion of ornithine to glutamate semialdehyde. The protein is Ornithine aminotransferase of Macrococcus caseolyticus (strain JCSC5402) (Macrococcoides caseolyticum).